Reading from the N-terminus, the 89-residue chain is Small ribosomal subunit protein bS20 (89 aa).

The protein belongs to the bacterial ribosomal protein bS20 family.

Binds directly to 16S ribosomal RNA. This chain is Small ribosomal subunit protein bS20, found in Stenotrophomonas maltophilia (strain K279a).